We begin with the raw amino-acid sequence, 1455 residues long: DNA polymerase II large subunit (1455 aa).

The tract at residues 1409 to 1440 is disordered; sequence GLLENLSNGSKKTEKAEKAEKPRKKSDEKPKK. Residues 1419-1438 show a composition bias toward basic and acidic residues; that stretch reads KKTEKAEKAEKPRKKSDEKP.

It belongs to the archaeal DNA polymerase II family. In terms of assembly, heterodimer of a large subunit and a small subunit. This protein undergoes a protein self splicing that involves a post-translational excision of the intervening region (intein) followed by peptide ligation.

It catalyses the reaction DNA(n) + a 2'-deoxyribonucleoside 5'-triphosphate = DNA(n+1) + diphosphate. The enzyme catalyses Exonucleolytic cleavage in the 3'- to 5'-direction to yield nucleoside 5'-phosphates.. Functionally, possesses two activities: a DNA synthesis (polymerase) and an exonucleolytic activity that degrades single-stranded DNA in the 3'- to 5'-direction. Has a template-primer preference which is characteristic of a replicative DNA polymerase. The polypeptide is DNA polymerase II large subunit (polC) (Pyrococcus abyssi (strain GE5 / Orsay)).